The chain runs to 413 residues: E3 ubiquitin-protein ligase makorin (413 aa).

C3H1-type zinc fingers lie at residues 2–29 (PRHETDCRYFANGYCSKGNTCTFTHDVA) and 30–57 (TRNENICHFNLVGKCSYGRACRFLHTRP). The interval 61–85 (ELPSCSTPQTSQNQQNLQNSGQRVR) is disordered. A compositionally biased stretch (low complexity) spans 66–82 (STPQTSQNQQNLQNSGQ). A C3H1-type 3 zinc finger spans residues 138-167 (QAQLMMCPYHQKSGDCNRQDMDCPFAHGNY). An RING-type zinc finger spans residues 213 to 267 (CGICMENIFEKNLRFGILNGCQHCFCLDCIRQWRSKDQENVELATKTVRSCPECR). The C3H1-type 4 zinc finger occupies 296-327 (NTKRKICKYYSNERSRGACPFGNKCFYKHQLP).

Component of a complex at least containing lep-2, lin-28 and the long non-coding RNA lep-5, which mediates the degradation of lin-28. As to expression, expressed in seam, tail tip, and other hypodermal cells, head and tail neurons, the pharynx, intestine and the developing hermaphrodite somatic gonad. Not expressed in body wall muscle cells.

Its subcellular location is the cytoplasm. It carries out the reaction S-ubiquitinyl-[E2 ubiquitin-conjugating enzyme]-L-cysteine + [acceptor protein]-L-lysine = [E2 ubiquitin-conjugating enzyme]-L-cysteine + N(6)-ubiquitinyl-[acceptor protein]-L-lysine.. It participates in protein modification; protein ubiquitination. Its function is as follows. E3 ubiquitin ligase which catalyzes the covalent attachment of ubiquitin moieties onto substrate proteins. Promotes the larval to adult transition by binding to the long non-coding RNA lep-5 to target the heterochronic protein lin-28 for degradation by the proteasome. This association and degradation of lin-28 also controls the timing of the sexual differentiation of individual neurons in males including the AIM, AWA, ADF, ASJ and CEM neurons. Plays a role in governing the developmental timing of male tail tip morphogenesis. Plays a role in two aspects of male mating behavior: response to hermaphrodite contact and vulva location. May play a role in the detection of preferred food sources. The chain is E3 ubiquitin-protein ligase makorin from Caenorhabditis elegans.